The chain runs to 475 residues: tRNA-2-methylthio-N(6)-dimethylallyladenosine synthase (475 aa).

Positions 1–10 (MQETTVKRDG) are enriched in basic and acidic residues. The interval 1–22 (MQETTVKRDGASPSDAGTPATT) is disordered. The MTTase N-terminal domain maps to 27–144 (GKLYIRTFGC…LPDLIKRRRA (118 aa)). Positions 36, 73, 107, 181, 185, and 188 each coordinate [4Fe-4S] cluster. Positions 167-400 (RVDGATAFVS…QALINQQAAA (234 aa)) constitute a Radical SAM core domain. Positions 403–466 (QGMIGTRQRV…TNSLRGRVAG (64 aa)) constitute a TRAM domain.

This sequence belongs to the methylthiotransferase family. MiaB subfamily. As to quaternary structure, monomer. [4Fe-4S] cluster is required as a cofactor.

The protein localises to the cytoplasm. It catalyses the reaction N(6)-dimethylallyladenosine(37) in tRNA + (sulfur carrier)-SH + AH2 + 2 S-adenosyl-L-methionine = 2-methylsulfanyl-N(6)-dimethylallyladenosine(37) in tRNA + (sulfur carrier)-H + 5'-deoxyadenosine + L-methionine + A + S-adenosyl-L-homocysteine + 2 H(+). Functionally, catalyzes the methylthiolation of N6-(dimethylallyl)adenosine (i(6)A), leading to the formation of 2-methylthio-N6-(dimethylallyl)adenosine (ms(2)i(6)A) at position 37 in tRNAs that read codons beginning with uridine. The chain is tRNA-2-methylthio-N(6)-dimethylallyladenosine synthase from Bordetella bronchiseptica (strain ATCC BAA-588 / NCTC 13252 / RB50) (Alcaligenes bronchisepticus).